We begin with the raw amino-acid sequence, 187 residues long: MIITIKFESKEKLVSMKQYITVVGVSVNQEGTFSWRPGTFYMKIHEESAAGPFAKGAEISDLSNSSAIGCGISINQEGGDGSIRVKESSLRKKQERMSTKYPTTMSCREAFDQLTSCYSIGGQFRSYYRYGDFTSCDKQVSKFKFCIIHGNDPVKVQEWYKDQVSNNKALENTSGVIWQERETTANK.

The protein belongs to the EMI1 family.

Its function is as follows. Involved in sporulation. Required for the full activation of the early meiotic inducer IME1. The sequence is that of Early meiotic induction protein 1 (EMI1) from Saccharomyces cerevisiae (strain ATCC 204508 / S288c) (Baker's yeast).